Consider the following 587-residue polypeptide: Glutamine--tRNA ligase (587 aa).

The 'HIGH' region motif lies at 58 to 68 (PEPNGYLHIGH). ATP-binding positions include 59–61 (EPN) and 65–71 (HIGHAKS). L-glutamine-binding residues include Asp-91 and Tyr-240. Residues Thr-259 and 294–295 (RL) each bind ATP. The short motif at 301–305 (VTSKR) is the 'KMSKS' region element.

This sequence belongs to the class-I aminoacyl-tRNA synthetase family. In terms of assembly, monomer.

The protein localises to the cytoplasm. The catalysed reaction is tRNA(Gln) + L-glutamine + ATP = L-glutaminyl-tRNA(Gln) + AMP + diphosphate. The sequence is that of Glutamine--tRNA ligase from Bordetella pertussis (strain Tohama I / ATCC BAA-589 / NCTC 13251).